We begin with the raw amino-acid sequence, 705 residues long: DNA ligase (705 aa).

Residues 43–47 (DAEYD), 92–93 (SL), and aspartate 123 each bind NAD(+). Lysine 125 acts as the N6-AMP-lysine intermediate in catalysis. 4 residues coordinate NAD(+): arginine 146, glutamate 184, lysine 304, and lysine 328. The Zn(2+) site is built by cysteine 422, cysteine 425, cysteine 440, and cysteine 445. The 90-residue stretch at 607-696 (TPVTPLAGKK…EEISGQAADD (90 aa)) folds into the BRCT domain. The disordered stretch occupies residues 684 to 705 (SESEEISGQAADDYENSLLRVQ).

The protein belongs to the NAD-dependent DNA ligase family. LigA subfamily. The cofactor is Mg(2+). Mn(2+) is required as a cofactor.

It catalyses the reaction NAD(+) + (deoxyribonucleotide)n-3'-hydroxyl + 5'-phospho-(deoxyribonucleotide)m = (deoxyribonucleotide)n+m + AMP + beta-nicotinamide D-nucleotide.. DNA ligase that catalyzes the formation of phosphodiester linkages between 5'-phosphoryl and 3'-hydroxyl groups in double-stranded DNA using NAD as a coenzyme and as the energy source for the reaction. It is essential for DNA replication and repair of damaged DNA. The sequence is that of DNA ligase from Oleidesulfovibrio alaskensis (strain ATCC BAA-1058 / DSM 17464 / G20) (Desulfovibrio alaskensis).